We begin with the raw amino-acid sequence, 387 residues long: Alkanesulfonate monooxygenase (387 aa).

It belongs to the SsuD family.

The catalysed reaction is an alkanesulfonate + FMNH2 + O2 = an aldehyde + FMN + sulfite + H2O + 2 H(+). Functionally, catalyzes the desulfonation of aliphatic sulfonates. The chain is Alkanesulfonate monooxygenase from Cupriavidus necator (strain ATCC 17699 / DSM 428 / KCTC 22496 / NCIMB 10442 / H16 / Stanier 337) (Ralstonia eutropha).